Consider the following 481-residue polypeptide: Sphingosine kinase 2 (481 aa).

Residues 111-253 (GRPKRLLVFV…VDVATIAQGN (143 aa)) form the DAGKc domain. ATP-binding positions include 121–123 (NPF) and Thr153. Residue 178 to 181 (SGDG) coordinates substrate. Asp180 acts as the Proton donor/acceptor in catalysis. Residues Glu185 and 210-212 (GTG) contribute to the ATP site. Asp271 provides a ligand contact to substrate. ATP contacts are provided by residues Arg278, Arg284, and 441-443 (DGE).

The cofactor is Mg(2+). In terms of tissue distribution, highly expressed in flowers and siliques and at lower levels in roots, leaves and stems.

The protein localises to the vacuole membrane. It carries out the reaction a sphingoid base + ATP = a sphingoid 1-phosphate + ADP + H(+). Activated by phosphatidic acid (PA). Binding with PA stimulates the activity by promoting the binding of substrate to the catalytic site. In terms of biological role, involved in the production of sphingolipid metabolites. Phosphorylates sphingosine and various l sphingoid long-chain base (LCB) products, such as phytosphingosine (PHS, 4-hydroxysphinganine), 4-hydroxy-8-sphingenine, 4,8-sphingadienine and D-erythro-dihydrosphingosine, but has a very few activity toward D,L-threo- dihydrosphingosine. Is required for abscisic acid (ABA) signaling that mediates stomatal closure, inhibition of seed germination and root elongation. May function upstream of PLDALPHA1 and phosphatidic acid (PA) in an amplification response to ABA that mediates stomatal closure. The chain is Sphingosine kinase 2 (SPHK2) from Arabidopsis thaliana (Mouse-ear cress).